A 75-amino-acid polypeptide reads, in one-letter code: Large ribosomal subunit protein bL31 (75 aa).

Positions 16, 18, 37, and 40 each coordinate Zn(2+).

This sequence belongs to the bacterial ribosomal protein bL31 family. Type A subfamily. Part of the 50S ribosomal subunit. It depends on Zn(2+) as a cofactor.

Functionally, binds the 23S rRNA. The protein is Large ribosomal subunit protein bL31 of Nitrosospira multiformis (strain ATCC 25196 / NCIMB 11849 / C 71).